The following is a 252-amino-acid chain: MKNLFKGLMMSLSMFTIIPMPYVEWDEDGAKNMMKCYPIIGLIVGCVWFLGYKLINYLNISIVLKSALIMIIPFIITGMLHLDGFMDVCDAILSRRDKEEKLRILKDSTTGAFSVISVIILFFIQFGAVHSFLEYNKNPYILMFLPIISRNIVAYFFITIITIKESTLGSYFTKGTNIKDKVILILELALVCILFGIILGYIGIVILLIVTVAISLCVKKCINEFGGISGDVAGFSLVVGELVGLFSACLFT.

A run of 7 helical transmembrane segments spans residues leucine 4 to glutamate 24, proline 38 to leucine 58, isoleucine 60 to leucine 80, phenylalanine 113 to leucine 133, isoleucine 141 to isoleucine 161, leucine 190 to valine 210, and valine 232 to threonine 252.

This sequence belongs to the CobS family. Mg(2+) is required as a cofactor.

It localises to the cell membrane. It catalyses the reaction alpha-ribazole + adenosylcob(III)inamide-GDP = adenosylcob(III)alamin + GMP + H(+). The enzyme catalyses alpha-ribazole 5'-phosphate + adenosylcob(III)inamide-GDP = adenosylcob(III)alamin 5'-phosphate + GMP + H(+). It participates in cofactor biosynthesis; adenosylcobalamin biosynthesis; adenosylcobalamin from cob(II)yrinate a,c-diamide: step 7/7. Its function is as follows. Joins adenosylcobinamide-GDP and alpha-ribazole to generate adenosylcobalamin (Ado-cobalamin). Also synthesizes adenosylcobalamin 5'-phosphate from adenosylcobinamide-GDP and alpha-ribazole 5'-phosphate. In Clostridium botulinum (strain Eklund 17B / Type B), this protein is Adenosylcobinamide-GDP ribazoletransferase.